Here is a 312-residue protein sequence, read N- to C-terminus: Methionyl-tRNA formyltransferase (312 aa).

109 to 112 (SLLP) lines the (6S)-5,6,7,8-tetrahydrofolate pocket.

It belongs to the Fmt family.

It catalyses the reaction L-methionyl-tRNA(fMet) + (6R)-10-formyltetrahydrofolate = N-formyl-L-methionyl-tRNA(fMet) + (6S)-5,6,7,8-tetrahydrofolate + H(+). Its function is as follows. Attaches a formyl group to the free amino group of methionyl-tRNA(fMet). The formyl group appears to play a dual role in the initiator identity of N-formylmethionyl-tRNA by promoting its recognition by IF2 and preventing the misappropriation of this tRNA by the elongation apparatus. This is Methionyl-tRNA formyltransferase from Anaeromyxobacter dehalogenans (strain 2CP-1 / ATCC BAA-258).